The sequence spans 320 residues: uncharacterized protein (320 aa).

7 helical membrane passes run leucine 107–tyrosine 127, valine 131–serine 151, leucine 169–isoleucine 189, isoleucine 200–serine 220, isoleucine 228–leucine 248, alanine 260–serine 280, and threonine 299–tyrosine 319.

It localises to the cell membrane. This is an uncharacterized protein from Methanocaldococcus jannaschii (strain ATCC 43067 / DSM 2661 / JAL-1 / JCM 10045 / NBRC 100440) (Methanococcus jannaschii).